We begin with the raw amino-acid sequence, 119 residues long: Non-specific lipid-transfer protein 11 (119 aa).

The signal sequence occupies residues 1–28; the sequence is MRNITTTTRKMLLLVITILLGIAYHGEA. Intrachain disulfides connect C31–C78, C41–C55, C56–C101, and C76–C115.

It belongs to the plant LTP family.

Its function is as follows. Plant non-specific lipid-transfer proteins transfer phospholipids as well as galactolipids across membranes. May play a role in wax or cutin deposition in the cell walls of expanding epidermal cells and certain secretory tissues. This chain is Non-specific lipid-transfer protein 11 (LTP11), found in Arabidopsis thaliana (Mouse-ear cress).